The sequence spans 619 residues: UvrABC system protein C (619 aa).

The GIY-YIG domain occupies 20–98 (TAPGVYRMYA…IKSLSPRYNV (79 aa)). Residues 207–242 (DQLGEEIMHSMQQASEALEFERAARLRDLLSSLRSM) enclose the UVR domain.

This sequence belongs to the UvrC family. Interacts with UvrB in an incision complex.

The protein resides in the cytoplasm. Functionally, the UvrABC repair system catalyzes the recognition and processing of DNA lesions. UvrC both incises the 5' and 3' sides of the lesion. The N-terminal half is responsible for the 3' incision and the C-terminal half is responsible for the 5' incision. The protein is UvrABC system protein C of Xanthomonas euvesicatoria pv. vesicatoria (strain 85-10) (Xanthomonas campestris pv. vesicatoria).